The primary structure comprises 160 residues: Triabin (160 aa).

Residues 1–18 (MKTIIAVTIFGILTCAYA) form the signal peptide. Disulfide bonds link C24/C128, C57/C160, and C87/C102.

This sequence belongs to the calycin superfamily. Triabin family. In terms of tissue distribution, expressed in salivary glands.

The protein localises to the secreted. Thrombin inhibitor. Forms a non-covalent complex with thrombin at a molar ratio of 1:1. Inhibits thrombin-induced platelet aggregation. Prolongs thrombin clotting time and activated partial thromboplastin time. It only minimally suppresses the amidolytic activity of thrombin. Inhibits thrombin-mediated fibrin formation in the host. Inhibits thrombin-induced endothelium-dependent relaxant and contractile responses in host blood vessels. Inhibits thrombin-induced mitogenesis in host vascular smooth muscle cells. The protein is Triabin of Meccus pallidipennis (Triatomine bug).